The sequence spans 461 residues: Steroidogenic factor 1 (461 aa).

Residues 10–85 (DELCPVCGDK…VGMRLEAVRA (76 aa)) constitute a DNA-binding region (nuclear receptor). The segment at 13-33 (CPVCGDKVSGYHYGLLTCESC) adopts an NR C4-type zinc-finger fold. Residues Lys-34, Lys-38, and Lys-72 each carry the N6-acetyllysine modification. The segment at 49–73 (CTESQSCKIDKTQRKRCPFCRFQKC) adopts an NR C4-type zinc-finger fold. The tract at residues 116-158 (NGFKLETGPPVGVPPPPPPPPDYMLPHGLHASEPKGLASGPPA) is disordered. A Glycyl lysine isopeptide (Lys-Gly) (interchain with G-Cter in SUMO) cross-link involves residue Lys-119. Residues 126–138 (VGVPPPPPPPPDY) show a composition bias toward pro residues. Residue Lys-194 forms a Glycyl lysine isopeptide (Lys-Gly) (interchain with G-Cter in SUMO) linkage. The residue at position 203 (Ser-203) is a Phosphoserine; by CDK7. One can recognise an NR LBD domain in the interval 222-459 (GVPELILQLL…NLLIEMLQAK (238 aa)). Residues 230 to 461 (LLQLEPDEDQ…LIEMLQAKQT (232 aa)) form an important for dimerization region. A 1,2-diacyl-sn-glycero-3-phosphocholine is bound by residues Gly-341, Tyr-436, and Lys-440.

This sequence belongs to the nuclear hormone receptor family. NR5 subfamily. As to quaternary structure, binds DNA as a monomer. Part of a complex consisting of SFPQ, NONO and NR5A1. Interacts with NR0B2. Interacts with DGKQ and CDK7. Binds to and activated by HIPK3. Post-translationally, may be regulated by phosphorylation and dephosphorylation. Acetylation stimulates the transcriptional activity. In terms of processing, sumoylation reduces CDK7-mediated phosphorylation on Ser-203. Post-translationally, phosphorylated on Ser-203 by CDK7. This phosphorylation promotes transcriptional activity. Adrenal, ovary, testis, placenta, adipocyte, and brain.

Its subcellular location is the nucleus. In terms of biological role, transcriptional activator. Seems to be essential for sexual differentiation and formation of the primary steroidogenic tissues. Binds to the Ad4 site found in the promoter region of steroidogenic P450 genes such as CYP11A, CYP11B and CYP21B. Also regulates the AMH/Muellerian inhibiting substance gene as well as the AHCH and STAR genes. 5'-YCAAGGYC-3' and 5'-RRAGGTCA-3' are the consensus sequences for the recognition by NR5A1. The SFPQ-NONO-NR5A1 complex binds to the CYP17 promoter and regulates basal and cAMP-dependent transcriptional activity. Binds phospholipids with a phosphatidylinositol (PI) headgroup, in particular PI(3,4)P2 and PI(3,4,5)P3. Activated by the phosphorylation of NR5A1 by HIPK3 leading to increased steroidogenic gene expression upon cAMP signaling pathway stimulation. This is Steroidogenic factor 1 (NR5A1) from Bos taurus (Bovine).